The primary structure comprises 514 residues: Cytochrome P450 monooxygenase ptmQ (514 aa).

Residues 3–23 (YVAQSPWIATLIVTATTYCTL) form a helical membrane-spanning segment. N148 carries an N-linked (GlcNAc...) asparagine glycan. C452 is a heme binding site. N486 is a glycosylation site (N-linked (GlcNAc...) asparagine).

It belongs to the cytochrome P450 family. The cofactor is heme.

It localises to the membrane. It participates in secondary metabolite biosynthesis. Its function is as follows. Cytochrome P450 monooxygenase; part of the gene cluster that mediates the biosynthesis of the indole diterpenes penitrems. The geranylgeranyl diphosphate (GGPP) synthase ptmG catalyzes the first step in penitrem biosynthesis via conversion of farnesyl pyrophosphate and isopentyl pyrophosphate into geranylgeranyl pyrophosphate (GGPP). Condensation of indole-3-glycerol phosphate with GGPP by the prenyl transferase ptmC then forms 3-geranylgeranylindole (3-GGI). Epoxidation by the FAD-dependent monooxygenase ptmM leads to a epoxidized-GGI that is substrate of the terpene cyclase ptmB for cyclization to yield paspaline. Paspaline is subsequently converted to 13-desoxypaxilline by the cytochrome P450 monooxygenase ptmP, the latter being then converted to paxilline by the cytochrome P450 monooxygenase ptmQ. Paxilline is converted to beta-paxitriol via C-10 ketoreduction by the short-chain dehydrogenase ptmH which can be monoprenylated at the C-20 by the indole diterpene prenyltransferase ptmD. A two-step elimination (acetylation and elimination) process performed by the O-acetyltransferase ptmV and ptmI leads to the production of the prenylated form of penijanthine. The FAD-linked oxidoreductase ptmO then converts the prenylated form of penijanthine into PC-M5 which is in turn transformed into PC-M4 by the aromatic dimethylallyltransferase ptmE. Five sequential oxidative transformations performed by the cytochrome P450 monooxygenases ptmK, ptmU, ptmL, ptmN and ptmJ yield the various penitrem compounds. PtmK, ptmU and ptmM are involved in the formation of the key bicyclic ring of penitrem C via the formation of the intermediates secopenitrem D and penitrem D. PtmL catalyzes the epoxidation of penitrem D and C to yield penitrem B and F, respectively. PtmJ catalyzes the last benzylic hydroxylation to convert penitrem B to prenitrem E and penitrem F to penitrem A. This chain is Cytochrome P450 monooxygenase ptmQ, found in Penicillium ochrochloron.